An 871-amino-acid polypeptide reads, in one-letter code: Espin (871 aa).

ANK repeat units follow at residues 1–31 (MALEQALQAARRGDLDVLRSLHAAGLLGPSL), 35–66 (LDALPVHHAARSGKLHCLRYLVEEVALPAVSR), 69–99 (NGATPAHDAAATGYLSCLQWLLTQGGCRVQE), 103–132 (SGATVLHLAARFGHPDVVKWLLYQGGANSA), 137–167 (TGALPIHYAAAKGDLPSLKLLVGHYPEGVNA), 171–201 (NGATPLYLACQEGHLEVTKYLVQECSADPHL), 205–235 (DGMTPLHAAAQMGHNPVLVWLVSFADVSFSE), 239–268 (DGATAMHFAASRGHTKVLSWLLLHGAEISQ), and 271–300 (WGGTPLHDAAENGELECCQILAVNGAGLDV). A phosphoserine mark is found at serine 338 and serine 342. 4 disordered regions span residues 349–400 (QLDS…RGIP), 416–469 (PEKS…VGLH), 493–750 (KVEL…APGV), and 819–850 (EREQKRKEEERQKLEEIQRAKEQSEKLRTLGY). The span at 352-365 (SGMSSPNTTMSVQP) shows a compositional bias: polar residues. A compositionally biased stretch (low complexity) spans 377 to 395 (FSNYDSCSSSHSSSKGQRS). A compositionally biased stretch (pro residues) spans 428–465 (PSPPPPPPPPPPSFPPPPPPTGTQPPPPPPGYPAPNPP). 3 positions are modified to phosphoserine: serine 517, serine 524, and serine 556. Residues 522–548 (QDSELLHRQELLRHSTGLRRQDSDRKQ) show a composition bias toward basic and acidic residues. Residues 606-629 (LPPPPPPPPLPEALSSPPPAPPLP) are compositionally biased toward pro residues. 2 stretches are compositionally biased toward polar residues: residues 659–670 (KSFNMMSPTGDN) and 685–707 (PTPQSKGLTTVFSGSGQPASQPE). Position 665 is a phosphoserine (serine 665). Positions 669 to 686 (DNSELLAEIKAGKSLKPT) constitute a WH2 domain. A phosphoserine mark is found at serine 704, serine 708, and serine 714. A coiled-coil region spans residues 772 to 848 (KRQVMVRKLQ…KEQSEKLRTL (77 aa)).

As to quaternary structure, monomer. Binds F-actin in a Ca(2+)-resistant fashion. Interacts (via N-terminus) with BAIAP2 (via SH3-domain). Interacts with PFN2. Interacts with MYO3A (via C-terminus). Interacts with MYO3B (via C-terminus). Expressed at high concentration in the microvillar parallel actin bundle (PAB) of hair cells stereocilia in the cochlea and vestibular system. Detected also at high levels of a number of other sensory cell types, including taste receptor cells, solitary chemoreceptor cells, vomeronasal sensory neurons and Merkel cells. Isoforms 2, 3, 4 and 5 are expressed in Purkinje cells dendritic spines. Expressed in utricle hair bundles (at protein level).

Its subcellular location is the cytoplasm. The protein localises to the cytoskeleton. It localises to the cell projection. The protein resides in the stereocilium. It is found in the microvillus. Its subcellular location is the cell junction. The protein localises to the dendritic spine. Multifunctional actin-bundling protein. Plays a major role in regulating the organization, dimension, dynamics and signaling capacities of the actin filament-rich microvilli in the mechanosensory and chemosensory cells. Required for the assembly and stabilization of the stereociliary parallel actin bundles. Plays a crucial role in the formation and maintenance of inner ear hair cell stereocilia. Involved in the elongation of actin in stereocilia. In extrastriolar hair cells, required for targeting MYO3B to stereocilia tips, and for regulation of stereocilia diameter and staircase formation. The polypeptide is Espin (Espn) (Mus musculus (Mouse)).